A 153-amino-acid chain; its full sequence is 6,7-dimethyl-8-ribityllumazine synthase (153 aa).

5-amino-6-(D-ribitylamino)uracil-binding positions include F22, 56-58 (AFE), and 80-82 (AVI). 85–86 (AT) contacts (2S)-2-hydroxy-3-oxobutyl phosphate. H88 functions as the Proton donor in the catalytic mechanism. F113 provides a ligand contact to 5-amino-6-(D-ribitylamino)uracil. R127 is a binding site for (2S)-2-hydroxy-3-oxobutyl phosphate.

The protein belongs to the DMRL synthase family.

It carries out the reaction (2S)-2-hydroxy-3-oxobutyl phosphate + 5-amino-6-(D-ribitylamino)uracil = 6,7-dimethyl-8-(1-D-ribityl)lumazine + phosphate + 2 H2O + H(+). It functions in the pathway cofactor biosynthesis; riboflavin biosynthesis; riboflavin from 2-hydroxy-3-oxobutyl phosphate and 5-amino-6-(D-ribitylamino)uracil: step 1/2. Catalyzes the formation of 6,7-dimethyl-8-ribityllumazine by condensation of 5-amino-6-(D-ribitylamino)uracil with 3,4-dihydroxy-2-butanone 4-phosphate. This is the penultimate step in the biosynthesis of riboflavin. This is 6,7-dimethyl-8-ribityllumazine synthase from Alkaliphilus metalliredigens (strain QYMF).